We begin with the raw amino-acid sequence, 184 residues long: Photosystem I assembly protein Ycf4 (184 aa).

Helical transmembrane passes span 22–42 (FCWA…GTSS) and 57–77 (IIFF…LFIS).

The protein belongs to the Ycf4 family.

It is found in the plastid. It localises to the chloroplast thylakoid membrane. In terms of biological role, seems to be required for the assembly of the photosystem I complex. The polypeptide is Photosystem I assembly protein Ycf4 (Capsella bursa-pastoris (Shepherd's purse)).